The following is a 160-amino-acid chain: Eosinophil cationic protein (160 aa).

Residues 1 to 27 (MVPKLFTSQICLLLLLGLSGVGGSLHA) form the signal peptide. The interval 28–72 (KPRQFTRAQWFAIQHVSLNPPQCTTAMRVINNYQRRCKDQNTFLR) is required for nearly all of the bactericidal activities; partially involved in LPS-binding. Histidine 42 serves as the catalytic Proton acceptor. Intrachain disulfides connect cysteine 50/cysteine 110, cysteine 64/cysteine 123, cysteine 82/cysteine 138, and cysteine 89/cysteine 98. 3'-nitrotyrosine is present on tyrosine 60. 65 to 69 (KDQNT) is a binding site for substrate. Residues asparagine 86, asparagine 92, asparagine 111, and asparagine 119 are each glycosylated (N-linked (GlcNAc...) asparagine). Histidine 155 functions as the Proton donor in the catalytic mechanism.

The protein belongs to the pancreatic ribonuclease family. In terms of assembly, interacts with bacterial lipopolysaccharide (LPS) and lipoteichoic acid (LTA). In vitro interacts with phospholipid bilayers.

The protein localises to the secreted. Cytotoxin and helminthotoxin with low-efficiency ribonuclease activity. Possesses a wide variety of biological activities. Exhibits antibacterial activity. The protein is Eosinophil cationic protein (RNASE3) of Pongo pygmaeus (Bornean orangutan).